The following is a 312-amino-acid chain: Methionyl-tRNA formyltransferase (312 aa).

(6S)-5,6,7,8-tetrahydrofolate is bound at residue 112-115; that stretch reads SLLP.

The protein belongs to the Fmt family.

The enzyme catalyses L-methionyl-tRNA(fMet) + (6R)-10-formyltetrahydrofolate = N-formyl-L-methionyl-tRNA(fMet) + (6S)-5,6,7,8-tetrahydrofolate + H(+). Its function is as follows. Attaches a formyl group to the free amino group of methionyl-tRNA(fMet). The formyl group appears to play a dual role in the initiator identity of N-formylmethionyl-tRNA by promoting its recognition by IF2 and preventing the misappropriation of this tRNA by the elongation apparatus. This Magnetococcus marinus (strain ATCC BAA-1437 / JCM 17883 / MC-1) protein is Methionyl-tRNA formyltransferase.